The following is a 1214-amino-acid chain: Ubiquitin carboxyl-terminal hydrolase 36 (1214 aa).

The tract at residues 124–169 (AVGSNGHDNNTVNGGTVNGNRKQTVDSGQSNQNSSANPNELPKPKR) is disordered. Positions 132–143 (NNTVNGGTVNGN) are enriched in low complexity. Residues 144–161 (RKQTVDSGQSNQNSSANP) show a composition bias toward polar residues. The USP domain maps to 192–502 (AGMLNVGNTC…NAYIMFYELD (311 aa)). Residue C201 is the Nucleophile of the active site. H461 acts as the Proton acceptor in catalysis. Low complexity predominate over residues 509–523 (SSTINNNSSSSSNNS). Residues 509 to 532 (SSTINNNSSSSSNNSVAPKLNGLR) form a disordered region. Phosphoserine occurs at positions 553 and 555. Disordered stretches follow at residues 631-819 (GEAA…KQKT), 836-964 (HRIA…ASKS), 977-1001 (QKLLNGSAKSAATTRPGNGYQSESV), 1048-1161 (HGDT…PNFQ), and 1176-1214 (KFQQQRALQRHLAAGGGFTRRQQQSTGQQQQQQQQQQQS). Residues 633 to 651 (AAPNANTNANANKSSCNNN) show a composition bias toward low complexity. Acidic residues predominate over residues 666-685 (SDEDEDEDDSDDDDDDDDDD). At T717 the chain carries Phosphothreonine. A phosphoserine mark is found at S727 and S729. 2 stretches are compositionally biased toward low complexity: residues 735–751 (QQQQQQQQQLLQTPQQL) and 785–816 (KTNGSVSNTSNSSHSKAKSASNASSANVNSSK). The span at 856-868 (EQVQTEQGTKKLN) shows a compositional bias: polar residues. Low complexity predominate over residues 869–878 (SASSASASKS). Residue S891 is modified to Phosphoserine. At T894 the chain carries Phosphothreonine. S897 is subject to Phosphoserine. A compositionally biased stretch (acidic residues) spans 915 to 942 (DDDDEEDEEEDDVEADADQEDDDDEVVV). Residue T951 is modified to Phosphothreonine. The segment covering 983–1001 (SAKSAATTRPGNGYQSESV) has biased composition (polar residues). Positions 1058–1076 (NSSSNNSSNINSNSNSNSN) are enriched in low complexity. Basic and acidic residues predominate over residues 1089–1098 (EAREQRKRDA). 2 stretches are compositionally biased toward low complexity: residues 1178–1188 (QQQRALQRHLA) and 1197–1214 (QQQSTGQQQQQQQQQQQS).

It belongs to the peptidase C19 family. Interacts with atms/PAF1, but not with CycT.

Its subcellular location is the nucleus. The protein resides in the nucleolus. The catalysed reaction is Thiol-dependent hydrolysis of ester, thioester, amide, peptide and isopeptide bonds formed by the C-terminal Gly of ubiquitin (a 76-residue protein attached to proteins as an intracellular targeting signal).. Required for maintaining multiple types of adult stem cells, including male and female germline, epithelial follicle cell and intestinal stem cells. May function as a transcriptional repressor by continually deubiquiting histone H2B at the promoters of genes critical for cellular differentiation, thereby preventing histone H3 'Lys-4' trimethylation (H3K4). Controls selective autophagy activation by ubiquitinated proteins. The chain is Ubiquitin carboxyl-terminal hydrolase 36 (Usp36) from Drosophila virilis (Fruit fly).